A 92-amino-acid chain; its full sequence is Small ribosomal subunit protein uS19 (92 aa).

The protein belongs to the universal ribosomal protein uS19 family.

Functionally, protein S19 forms a complex with S13 that binds strongly to the 16S ribosomal RNA. This Brucella anthropi (strain ATCC 49188 / DSM 6882 / CCUG 24695 / JCM 21032 / LMG 3331 / NBRC 15819 / NCTC 12168 / Alc 37) (Ochrobactrum anthropi) protein is Small ribosomal subunit protein uS19.